The following is a 109-amino-acid chain: Putative pterin-4-alpha-carbinolamine dehydratase (109 aa).

This sequence belongs to the pterin-4-alpha-carbinolamine dehydratase family.

It carries out the reaction (4aS,6R)-4a-hydroxy-L-erythro-5,6,7,8-tetrahydrobiopterin = (6R)-L-erythro-6,7-dihydrobiopterin + H2O. This is Putative pterin-4-alpha-carbinolamine dehydratase from Rickettsia canadensis (strain McKiel).